The sequence spans 201 residues: Large ribosomal subunit protein uL18 (201 aa).

Belongs to the universal ribosomal protein uL18 family. Part of the 50S ribosomal subunit. Contacts the 5S and 23S rRNAs.

Functionally, this is one of the proteins that bind and probably mediate the attachment of the 5S RNA into the large ribosomal subunit, where it forms part of the central protuberance. The sequence is that of Large ribosomal subunit protein uL18 from Thermococcus gammatolerans (strain DSM 15229 / JCM 11827 / EJ3).